The sequence spans 662 residues: tRNA 5-methylaminomethyl-2-thiouridine biosynthesis bifunctional protein MnmC (662 aa).

Positions Met1–Ala245 are tRNA (mnm(5)s(2)U34)-methyltransferase. Residues Ile270–Lys662 form an FAD-dependent cmnm(5)s(2)U34 oxidoreductase region.

The protein in the N-terminal section; belongs to the methyltransferase superfamily. tRNA (mnm(5)s(2)U34)-methyltransferase family. In the C-terminal section; belongs to the DAO family. The cofactor is FAD.

Its subcellular location is the cytoplasm. The enzyme catalyses 5-aminomethyl-2-thiouridine(34) in tRNA + S-adenosyl-L-methionine = 5-methylaminomethyl-2-thiouridine(34) in tRNA + S-adenosyl-L-homocysteine + H(+). In terms of biological role, catalyzes the last two steps in the biosynthesis of 5-methylaminomethyl-2-thiouridine (mnm(5)s(2)U) at the wobble position (U34) in tRNA. Catalyzes the FAD-dependent demodification of cmnm(5)s(2)U34 to nm(5)s(2)U34, followed by the transfer of a methyl group from S-adenosyl-L-methionine to nm(5)s(2)U34, to form mnm(5)s(2)U34. In Klebsiella pneumoniae subsp. pneumoniae (strain ATCC 700721 / MGH 78578), this protein is tRNA 5-methylaminomethyl-2-thiouridine biosynthesis bifunctional protein MnmC.